The chain runs to 353 residues: Melatonin receptor type 1A (353 aa).

The segment covering 1 to 15 has biased composition (polar residues); that stretch reads MKGNGSTLLNASQQA. The interval 1–23 is disordered; it reads MKGNGSTLLNASQQAPGVGEGGG. The Extracellular segment spans residues 1–32; that stretch reads MKGNGSTLLNASQQAPGVGEGGGPRPSWLAST. 2 N-linked (GlcNAc...) asparagine glycosylation sites follow: Asn4 and Asn10. Residues 33–53 form a helical membrane-spanning segment; it reads LAFILIFTIVVDILGNLLVIL. The Cytoplasmic segment spans residues 54–66; it reads SVYRNKKLRNAGN. The chain crosses the membrane as a helical span at residues 67 to 87; that stretch reads IFVVSLAIADLVVAIYPYPLV. Residues 88–105 are Extracellular-facing; it reads LTSIFNNGWNLGYLHCQI. A disulfide bridge links Cys103 with Cys180. The chain crosses the membrane as a helical span at residues 106–126; that stretch reads SAFLMGLSVIGSIFNITGIAI. The Cytoplasmic segment spans residues 127-147; it reads NRYCYICHSLKYDRLYSNKNS. Residues 148–168 traverse the membrane as a helical segment; that stretch reads LCYVFLIWVLTLVAIMPNLQT. At 169–190 the chain is on the extracellular side; that stretch reads GTLQYDPRIYSCTFTQSVSSAY. Residues 191–211 traverse the membrane as a helical segment; sequence TIAVVVFHFIVPMIIVIFCYL. Residues 212 to 243 lie on the Cytoplasmic side of the membrane; the sequence is RIWILVLQVRRRVKPDSKPRLKPQDFRNFVTM. A helical transmembrane segment spans residues 244–264; sequence FVVFVLFAICWAPLNFIGLIV. The Extracellular portion of the chain corresponds to 265–277; it reads ASDPATMAPRIPE. A helical membrane pass occupies residues 278 to 298; that stretch reads WLFVASYYMAYFNSCLNAIIY. Residues 299-353 are Cytoplasmic-facing; the sequence is GLLNQNFRQEYKRILVSLFTAKMCFVDSSNDPADKIKCKPAPLIANNNLIKVDSV.

Belongs to the G-protein coupled receptor 1 family. At least in the brain, more precisely in the pars tuberalis and the suprachiasmatic nucleus.

The protein resides in the cell membrane. Functionally, high affinity receptor for melatonin. Likely to mediate the reproductive and circadian actions of melatonin. The activity of this receptor is mediated by pertussis toxin sensitive G proteins that inhibit adenylate cyclase activity. Possibly involved in sleep induction, by melatonin activation of the potassium channel KCNMA1/BK and the dissociation of G-beta and G-gamma subunits, thereby decreasing synaptic transmission. The protein is Melatonin receptor type 1A (MTNR1A) of Phodopus sungorus (Striped hairy-footed hamster).